Reading from the N-terminus, the 247-residue chain is Protein FAM133B (247 aa).

Disordered regions lie at residues 19-38 (SRGPIQSSGPTIQDYLNRPR) and 70-247 (KKEL…PDSP). Residues 70–80 (KKELEKHREKL) show a composition bias toward basic and acidic residues. S82 is subject to Phosphoserine. The span at 89-102 (KKRQRKKKEKKKSG) shows a compositional bias: basic residues. Low complexity predominate over residues 103 to 119 (RYSSSSSSSSDSSSSSS). The segment covering 128–140 (QGKRRKKKKNRSH) has biased composition (basic residues). Residues 165 to 176 (KDGTEKEKDIKG) are compositionally biased toward basic and acidic residues. Phosphoserine is present on residues S191, S192, S194, and S196. Residues 211–221 (SSEEREKATEK) are compositionally biased toward basic and acidic residues. Positions 222 to 239 (TKKKKKHKKHSKKKKKKA) are enriched in basic residues.

It belongs to the FAM133 family.

The protein is Protein FAM133B (FAM133B) of Homo sapiens (Human).